The primary structure comprises 73 residues: Antimicrobial peptide 143 (73 aa).

The N-terminal stretch at Met-1–Ala-22 is a signal peptide. Residue Lys-38 is modified to Lysine amide. Positions Glu-44–Tyr-73 are excised as a propeptide.

This sequence belongs to the non-disulfide-bridged peptide (NDBP) superfamily. Short antimicrobial peptide (group 4) family. Expressed by the venom gland.

It is found in the secreted. Its subcellular location is the target cell membrane. Functionally, cationic host defense peptide that have antibacterial activity by breaking membranes. Is more effective on Gram-positive than on Gram-negative bacteria. The polypeptide is Antimicrobial peptide 143 (Lychas mucronatus (Chinese swimming scorpion)).